Consider the following 436-residue polypeptide: Protein FAM83A (436 aa).

The interval 1 to 298 (MSRSRHVGKI…LYASSKPLMG (298 aa)) is DUF1669. A disordered region spans residues 73–95 (AQAKEPPDAPDSAGGAESGPRGL). Phosphoserine occurs at positions 301, 329, 350, and 359. The interval 302-371 (PRLVAPFQPN…APIPPTVPRL (70 aa)) is disordered. Residues 321 to 349 (LSGTSDSASDRTSSNPFSSLSTGSNAHNQ) are compositionally biased toward polar residues. The segment covering 350–359 (SLSTSSGPSS) has biased composition (low complexity).

It belongs to the FAM83 family. Directly interacts (via DUF1669) with casein kinase isoforms CSNK1A1, CSNK1A1L, CSNK1D and CSNK1E. Post-translationally, may be phosphorylated upon EGFR activation. In terms of tissue distribution, widely expressed, with relatively higher expression levels in adipose tissues, especially in epididymal and inguinal white adipose tissue (at protein level).

The protein localises to the cytoplasm. The protein resides in the mitochondrion. Its function is as follows. Involved in mitochondrial maintenance during adipogenesis. May be acting by playing a role in the maintenance of normal mitochondrial function. In Mus musculus (Mouse), this protein is Protein FAM83A.